Consider the following 305-residue polypeptide: uncharacterized protein (305 aa).

Residues 1–29 form the signal peptide; that stretch reads MKKWFSSISKKKVSFSTLLLLGSGIVLSS. Residue C30 is the site of N-palmitoyl cysteine attachment. The S-diacylglycerol cysteine moiety is linked to residue C30. Residues 234–265 are disordered; it reads FYNPDNSNGSNAPGSNQPNQDSGNNGSTTPAA. The segment covering 237–258 has biased composition (polar residues); sequence PDNSNGSNAPGSNQPNQDSGNN.

It localises to the cell membrane. This is an uncharacterized protein from Mycoplasma pneumoniae (strain ATCC 29342 / M129 / Subtype 1) (Mycoplasmoides pneumoniae).